The primary structure comprises 373 residues: Chaperone protein DnaJ (373 aa).

Residues 4 to 68 enclose the J domain; that stretch reads NYYQILGVSK…QTRAAYDRLG (65 aa). A CR-type zinc finger spans residues 136–214; that stretch reads GIEKNISFSS…CHGMGRYHKQ (79 aa). Zn(2+) contacts are provided by Cys-149, Cys-152, Cys-166, Cys-169, Cys-188, Cys-191, Cys-202, and Cys-205. CXXCXGXG motif repeat units lie at residues 149–156, 166–173, 188–195, and 202–209; these read CDTCHGSG, CDACSGVG, CHKCQGNG, and CKKCHGMG.

This sequence belongs to the DnaJ family. As to quaternary structure, homodimer. Zn(2+) is required as a cofactor.

It is found in the cytoplasm. Participates actively in the response to hyperosmotic and heat shock by preventing the aggregation of stress-denatured proteins and by disaggregating proteins, also in an autonomous, DnaK-independent fashion. Unfolded proteins bind initially to DnaJ; upon interaction with the DnaJ-bound protein, DnaK hydrolyzes its bound ATP, resulting in the formation of a stable complex. GrpE releases ADP from DnaK; ATP binding to DnaK triggers the release of the substrate protein, thus completing the reaction cycle. Several rounds of ATP-dependent interactions between DnaJ, DnaK and GrpE are required for fully efficient folding. Also involved, together with DnaK and GrpE, in the DNA replication of plasmids through activation of initiation proteins. In Rickettsia peacockii (strain Rustic), this protein is Chaperone protein DnaJ.